A 141-amino-acid chain; its full sequence is Hemoglobin subunit alpha-A (141 aa).

The 141-residue stretch at 1 to 141 (MLSASDKANV…VGLVLTAKYR (141 aa)) folds into the Globin domain. H58 is a binding site for O2. H87 is a binding site for heme b.

The protein belongs to the globin family. In terms of assembly, there are three forms of hemoglobin in Sphenodon: A, A' and D. Hb A is a tetramer of two alpha-A and two beta-1, Hb A' is a tetramer of two alpha-a and two beta-2, Hb D is a tetramer of two alpha-D and two beta-2. Red blood cells.

Involved in oxygen transport from the lung to the various peripheral tissues. The protein is Hemoglobin subunit alpha-A (HBAA) of Sphenodon punctatus (Tuatara).